The following is a 1154-amino-acid chain: Coiled-coil domain-containing protein 136 (1154 aa).

A disordered region spans residues 1–48 (MQAMEGEVLLPALYEEEEEEEEEEEEVEEEEEQVQKGGSVGSLSVNKH). The span at 14 to 32 (YEEEEEEEEEEEEVEEEEE) shows a compositional bias: acidic residues. The residue at position 52 (Ser52) is a Phosphoserine. Coiled coils occupy residues 696–733 (QAKQ…LQVQ) and 859–974 (KLQA…RPSV). Residues 1031-1058 (DGLAKEEEKKEEMEEEKKQVKEEAKEQC) show a composition bias toward basic and acidic residues. The tract at residues 1031–1131 (DGLAKEEEKK…SSPTPNPPIF (101 aa)) is disordered. The segment covering 1077–1109 (DQEENEEDKEEEEKEEDSEEEEDDADSSLESPE) has biased composition (acidic residues). Residues 1130–1150 (IFSLPLVGLVVISALLWCWWA) traverse the membrane as a helical segment.

In terms of tissue distribution, expressed in gastric tissues. Down-regulated in gastric cancer.

Its subcellular location is the cytoplasmic vesicle. It is found in the secretory vesicle. It localises to the acrosome membrane. Functionally, may play a role in acrosome formation in spermatogenesis and in fertilization. The polypeptide is Coiled-coil domain-containing protein 136 (CCDC136) (Homo sapiens (Human)).